The following is a 423-amino-acid chain: Tegument protein UL43 (423 aa).

The segment covering 1 to 12 (MEKTPAETTAVS) has biased composition (polar residues). The segment at 1-46 (MEKTPAETTAVSAGNVPRDSIPCITNVSADTRGRTRPSRPATVPQR) is disordered.

It belongs to the herpesviridae US22 family.

It is found in the virion tegument. The protein is Tegument protein UL43 (UL43) of Homo sapiens (Human).